Here is an 86-residue protein sequence, read N- to C-terminus: DNA-directed RNA polymerase subunit omega (86 aa).

A compositionally biased stretch (basic and acidic residues) spans 67–76 (SAREHAKESQ). The disordered stretch occupies residues 67 to 86 (SAREHAKESQVSEEEVREES). Residues 77–86 (VSEEEVREES) show a composition bias toward acidic residues.

It belongs to the RNA polymerase subunit omega family. The RNAP catalytic core consists of 2 alpha, 1 beta, 1 beta' and 1 omega subunit. When a sigma factor is associated with the core the holoenzyme is formed, which can initiate transcription.

It carries out the reaction RNA(n) + a ribonucleoside 5'-triphosphate = RNA(n+1) + diphosphate. Promotes RNA polymerase assembly. Latches the N- and C-terminal regions of the beta' subunit thereby facilitating its interaction with the beta and alpha subunits. This chain is DNA-directed RNA polymerase subunit omega, found in Nitrosococcus oceani (strain ATCC 19707 / BCRC 17464 / JCM 30415 / NCIMB 11848 / C-107).